The primary structure comprises 135 residues: Protein PsiE homolog (135 aa).

4 helical membrane-spanning segments follow: residues valine 20–leucine 40, tyrosine 54–valine 74, histidine 82–valine 102, and proline 107–alanine 127.

This sequence belongs to the PsiE family.

Its subcellular location is the cell inner membrane. In Yersinia enterocolitica serotype O:8 / biotype 1B (strain NCTC 13174 / 8081), this protein is Protein PsiE homolog.